The chain runs to 350 residues: Anthranilate phosphoribosyltransferase (350 aa).

Residues glycine 81, 84–85 (GD), threonine 89, 91–94 (NIST), 109–117 (KHGGRSVSS), and serine 121 contribute to the 5-phospho-alpha-D-ribose 1-diphosphate site. Glycine 81 contacts anthranilate. Residue serine 93 participates in Mg(2+) binding. Arginine 167 serves as a coordination point for anthranilate. The Mg(2+) site is built by aspartate 230 and glutamate 231.

This sequence belongs to the anthranilate phosphoribosyltransferase family. In terms of assembly, homodimer. Mg(2+) serves as cofactor.

The catalysed reaction is N-(5-phospho-beta-D-ribosyl)anthranilate + diphosphate = 5-phospho-alpha-D-ribose 1-diphosphate + anthranilate. It participates in amino-acid biosynthesis; L-tryptophan biosynthesis; L-tryptophan from chorismate: step 2/5. In terms of biological role, catalyzes the transfer of the phosphoribosyl group of 5-phosphorylribose-1-pyrophosphate (PRPP) to anthranilate to yield N-(5'-phosphoribosyl)-anthranilate (PRA). The polypeptide is Anthranilate phosphoribosyltransferase (Nitrosospira multiformis (strain ATCC 25196 / NCIMB 11849 / C 71)).